The sequence spans 395 residues: Chalcone synthase 1 (395 aa).

Val-2 bears the N-acetylvaline mark. Residue Cys-169 is part of the active site.

Belongs to the thiolase-like superfamily. Chalcone/stilbene synthases family.

It carries out the reaction (E)-4-coumaroyl-CoA + 3 malonyl-CoA + 3 H(+) = 2',4,4',6'-tetrahydroxychalcone + 3 CO2 + 4 CoA. It functions in the pathway secondary metabolite biosynthesis; flavonoid biosynthesis. Functionally, the primary product of this enzyme is 4,2',4',6'-tetrahydroxychalcone (also termed naringenin-chalcone or chalcone) which can under specific conditions spontaneously isomerize into naringenin. The chain is Chalcone synthase 1 (CHS1) from Sinapis alba (White mustard).